The chain runs to 103 residues: MAAISINVSTVKPLGDRVFVKVSPAEEKTAGGILLPDNAKEKPQIGEVVQVGPGKRNDDGTYSPVEVKVGDKVLYSKYAGTDIKLGGDDYVLLTEKDILASVA.

Belongs to the GroES chaperonin family. As to quaternary structure, heptamer of 7 subunits arranged in a ring. Interacts with the chaperonin GroEL.

It is found in the cytoplasm. Together with the chaperonin GroEL, plays an essential role in assisting protein folding. The GroEL-GroES system forms a nano-cage that allows encapsulation of the non-native substrate proteins and provides a physical environment optimized to promote and accelerate protein folding. GroES binds to the apical surface of the GroEL ring, thereby capping the opening of the GroEL channel. The sequence is that of Co-chaperonin GroES from Synechocystis sp. (strain ATCC 27184 / PCC 6803 / Kazusa).